The following is a 281-amino-acid chain: Probable endonuclease 4 (281 aa).

Positions 69, 109, 145, 179, 182, 216, 229, 231, and 261 each coordinate Zn(2+).

It belongs to the AP endonuclease 2 family. Zn(2+) serves as cofactor.

It catalyses the reaction Endonucleolytic cleavage to 5'-phosphooligonucleotide end-products.. Its function is as follows. Endonuclease IV plays a role in DNA repair. It cleaves phosphodiester bonds at apurinic or apyrimidinic (AP) sites, generating a 3'-hydroxyl group and a 5'-terminal sugar phosphate. This is Probable endonuclease 4 from Yersinia enterocolitica serotype O:8 / biotype 1B (strain NCTC 13174 / 8081).